The following is a 356-amino-acid chain: MAPMGIRLSPLGIGVFCLLGLGVLYHVYSGFLTGKFSAFLLGDRAEDPGPGEDTVDLRELLAVSVRAAELGGLEVKKVRESNSLNEKAKGKTMEGADDKMTSGDVLSNKKMYHLIKNAFPALKVNTEEKVEADDEDAVSWDRNIPDDIKEQIKTKHVASESITMWIDPLDATQEYTENLVNYVTTMVCVAVNGKPVIGVIHKPFTGFTAWAMLDGGSSIKKRNSYNEKTPTFIVSRSHSGEVKEVTRQTFGNKTEIISAGGAGYKVLSLLDVTDDKQETADVYIHVTYIKKWDICAGNAILNALGGQMTTLKGEEIMYTGSELNKGGLLASIGMDHGVLVEKLSEKLQVNAKKPAK.

Residues 11–31 (LGIGVFCLLGLGVLYHVYSGF) traverse the membrane as a helical segment. The Mg(2+) site is built by Glu-127, Asp-167, Leu-169, Asp-170, and Asp-293. Substrate is bound at residue Glu-127. Residues 169–172 (LDAT) and Asp-293 each bind substrate.

Belongs to the inositol monophosphatase superfamily. Mg(2+) serves as cofactor.

It localises to the membrane. The catalysed reaction is a myo-inositol phosphate + H2O = myo-inositol + phosphate. It participates in polyol metabolism; myo-inositol biosynthesis; myo-inositol from D-glucose 6-phosphate: step 2/2. The protein is Inositol monophosphatase 3 (bpnt2) of Xenopus tropicalis (Western clawed frog).